Reading from the N-terminus, the 137-residue chain is MVTIKIECRTIARGVAEGEVLLSEDALSFLGNVDPKTGVVVDPGHAIYGECIRDKILVFPHGKGSTVGSYVIYQLKKNNVSPAAMINIDSEPIVAVGAIISDIPLVDRLDKDPFTIFKNGDRVKVDSTSGFVELMDR.

The active-site Proton acceptor is Ser65.

Belongs to the AcnX type II small subunit family. In terms of assembly, heterodimer composed of a large subunit (PMDh-L) and a small subunit (PMDh-S).

The catalysed reaction is (R)-5-phosphomevalonate = (2E)-3-methyl-5-phosphooxypent-2-enoate + H2O. The protein operates within isoprenoid biosynthesis; isopentenyl diphosphate biosynthesis via mevalonate pathway. In terms of biological role, component of a hydro-lyase that catalyzes the dehydration of mevalonate 5-phosphate (MVA5P) to form trans-anhydromevalonate 5-phosphate (tAHMP). Involved in the archaeal mevalonate (MVA) pathway, which provides fundamental precursors for isoprenoid biosynthesis, such as isopentenyl diphosphate (IPP) and dimethylallyl diphosphate (DMAPP). This chain is Phosphomevalonate dehydratase small subunit, found in Methanococcoides burtonii (strain DSM 6242 / NBRC 107633 / OCM 468 / ACE-M).